The sequence spans 434 residues: Pancreatic lipase-related protein 2 (434 aa).

Cys4 and Cys10 form a disulfide bridge. The interval 76 to 88 (IHGFTDSGENSWL) is required for galactolipase activity. Cys92 and Cys103 are disulfide-bonded. The active-site Nucleophile is the Ser154. The active-site Charge relay system is Asp178. Ca(2+)-binding residues include Glu189, Arg192, Asp194, and Asp197. Cys239 and Cys245 are joined by a disulfide. Residues 240–244 (KTGIS) are required for galactolipase activity. The active-site Charge relay system is the His247. 2 disulfide bridges follow: Cys269–Cys280 and Cys283–Cys288. The N-linked (GlcNAc...) asparagine glycan is linked to Asn318. The 113-residue stretch at 322 to 434 (WRYKVTVTLS…ENVEQTLSPC (113 aa)) folds into the PLAT domain. A disulfide bridge links Cys418 with Cys434.

The protein belongs to the AB hydrolase superfamily. Lipase family. In terms of tissue distribution, pancreas.

The protein resides in the secreted. The protein localises to the zymogen granule membrane. It localises to the cell projection. Its subcellular location is the neuron projection. The catalysed reaction is a triacylglycerol + H2O = a diacylglycerol + a fatty acid + H(+). It carries out the reaction a 1,2-diacyl-3-O-(beta-D-galactosyl)-sn-glycerol + 2 H2O = 3-beta-D-galactosyl-sn-glycerol + 2 a fatty acid + 2 H(+). The enzyme catalyses 1,2,3-tri-(9Z-octadecenoyl)-glycerol + H2O = di-(9Z)-octadecenoylglycerol + (9Z)-octadecenoate + H(+). It catalyses the reaction di-(9Z)-octadecenoylglycerol + H2O = (9Z-octadecenoyl)-glycerol + (9Z)-octadecenoate + H(+). The catalysed reaction is (9Z-octadecenoyl)-glycerol + H2O = glycerol + (9Z)-octadecenoate + H(+). It carries out the reaction 1-(9Z-octadecenoyl)-glycerol + H2O = glycerol + (9Z)-octadecenoate + H(+). The enzyme catalyses 1,2,3-tripropanoylglycerol + H2O = dipropanoylglycerol + propanoate + H(+). It catalyses the reaction 1,2,3-tributanoylglycerol + H2O = dibutanoylglycerol + butanoate + H(+). The catalysed reaction is 1,2,3-trioctanoylglycerol + H2O = dioctanoylglycerol + octanoate + H(+). It carries out the reaction 1,2-didecanoylglycerol + H2O = decanoylglycerol + decanoate + H(+). The enzyme catalyses long chain 1,2-diacyl-3-O-beta-D-galactosyl-sn-glycerol + H2O = long chain acyl-3-O-beta-D-galactosyl-sn-glycerol + a fatty acid + H(+). It catalyses the reaction 1,2-dioctanoyl-3-O-beta-D-galactosyl-sn-glycerol + H2O = octanoyl-3-(beta-D-galactosyl)-sn-glycerol + octanoate + H(+). The catalysed reaction is 1,2-didodecanoyl-3-beta-D-galactosyl-sn-glycerol + H2O = dodecanoyl-3-beta-D-galactosyl-sn-glycerol + dodecanoate + H(+). It carries out the reaction 1-beta-D-galactosyl-2,3-didodecanoyl-sn-glycerol + H2O = 1-beta-D-galactosyl-dodecanoyl-sn-glycerol + dodecanoate + H(+). The enzyme catalyses a 1,2-diacyl-3-O-[alpha-D-galactosyl-(1-&gt;6)-beta-D-galactosyl]-sn-glycerol + H2O = acyl-3-O-[alpha-D-galactosyl-(1-&gt;6)-beta-D-galactosyl]-sn-glycerol + a fatty acid + H(+). It catalyses the reaction long chain 1,2-diacyl-3-O-[alpha-D-galactosyl-(1-&gt;6)-beta-D-galactosyl]-sn-glycerol + H2O = long chain acyl-3-O-[alpha-D-galactosyl-(1-&gt;6)-beta-D-galactosyl]-sn-glycerol + a fatty acid + H(+). The catalysed reaction is 1,2-dioctanoyl-3-O-[alpha-D-galactosyl-(1-&gt;6)-beta-D-galactosyl]-sn-glycerol + H2O = octanoyl-3-O-[alpha-D-galactosyl-(1-&gt;6)-beta-D-galactosyl]-sn-glycerol + octanoate + H(+). It carries out the reaction 1,2-didodecanoyl-3-O-[alpha-D-galactosyl-(1-&gt;6)-beta-D-galactosyl]-sn-glycerol + H2O = dodecanoyl-3-O-[alpha-D-galactosyl-(1-&gt;6)-beta-D-galactosyl]-sn-glycerol + dodecanoate + H(+). The enzyme catalyses a 1,2-diacyl-sn-glycero-3-phosphocholine + H2O = a monoacyl-sn-glycero-3-phosphocholine + a fatty acid + H(+). It participates in glycerolipid metabolism; triacylglycerol degradation. It functions in the pathway glycolipid metabolism. CLPS stimulates triacylglycerol lipase activity. Not inhibited by bile salts. Lipase that primarily hydrolyzes triglycerides and galactosylglycerides. In neonates, may play a major role in pancreatic digestion of dietary fats such as milk fat globules enriched in long-chain triglycerides. Hydrolyzes short-, medium- and long-chain fatty acyls in triglycerides without apparent positional specificity. Can completely deacylate triacylglycerols. When the liver matures and bile salt synthesis increases, likely functions mainly as a galactolipase and monoacylglycerol lipase. Hydrolyzes monogalactosyldiglycerols (MGDG) and digalactosyldiacylglycerols (DGDG) present in a plant-based diet, releasing long-chain polyunsaturated fatty acids. Hydrolyzes medium- and long-chain fatty acyls in galactolipids. May act together with LIPF to hydrolyze partially digested triglycerides. Hydrolyzes long-chain monoglycerides with high efficiency. In cytotoxic T cells, contributes to perforin-dependent cell lysis, but is unlikely to mediate direct cytotoxicity. Also has low phospholipase activity. In neurons, required for the localization of the phospholipid 1-oleoyl-2-palmitoyl-PC (OPPC) to neurite tips through acyl chain remodeling of membrane phospholipids. The resulting OPPC-rich lipid membrane domain recruits the t-SNARE protein STX4 by selectively interacting with the STX4 transmembrane domain and this promotes surface expression of the dopamine transporter SLC6A3/DAT at neurite tips by facilitating fusion of SLC6A3-containing transport vesicles with the plasma membrane. This chain is Pancreatic lipase-related protein 2, found in Cavia porcellus (Guinea pig).